The sequence spans 269 residues: Energy-coupling factor transporter ATP-binding protein EcfA1 (269 aa).

Positions 8-242 (IEFKDVSFQY…EEALISVGLD (235 aa)) constitute an ABC transporter domain. Residue 42-49 (GHNGSGKS) participates in ATP binding.

The protein belongs to the ABC transporter superfamily. Energy-coupling factor EcfA family. In terms of assembly, forms a stable energy-coupling factor (ECF) transporter complex composed of 2 membrane-embedded substrate-binding proteins (S component), 2 ATP-binding proteins (A component) and 2 transmembrane proteins (T component).

The protein localises to the cell membrane. Functionally, ATP-binding (A) component of a common energy-coupling factor (ECF) ABC-transporter complex. Unlike classic ABC transporters this ECF transporter provides the energy necessary to transport a number of different substrates. In Staphylococcus epidermidis (strain ATCC 35984 / DSM 28319 / BCRC 17069 / CCUG 31568 / BM 3577 / RP62A), this protein is Energy-coupling factor transporter ATP-binding protein EcfA1.